The primary structure comprises 421 residues: Esterase LipQ (421 aa).

Catalysis depends on residues S249, D344, and H377.

It belongs to the 'GDXG' lipolytic enzyme family.

The catalysed reaction is hexadecanoate ester + H2O = an aliphatic alcohol + hexadecanoate + H(+). In terms of biological role, shows lipase activity. Is highly immunogenic and may play an important role in the virulence and pathogenesis of M.tuberculosis infection, by altering the balance of cytokines. Significantly down-regulates the expression level of pro-inflammatory cytokines (TNF-alpha and IFN-gamma) and up-regulates the level of anti-inflammatory cytokines such as IL-4 and IL-10 as compared to LPS stimulated macrophages. Also inhibits the expression of iNOS, TLR2 and transcription factor NF-kappa-B in LPS stimulated macrophages whereas the expression of TLR-4 remains unchanged. In Mycobacterium tuberculosis (strain ATCC 25618 / H37Rv), this protein is Esterase LipQ.